Reading from the N-terminus, the 476-residue chain is Bifunctional protein HldE (476 aa).

Residues 1-319 (MKVTLPAFEK…EALKSHQGES (319 aa)) are ribokinase. 195–198 (NMSE) serves as a coordination point for ATP. Asp-264 is a catalytic residue. Residues 345–476 (MTNGCFDILH…AIIQNIMSRH (132 aa)) form a cytidylyltransferase region.

The protein in the N-terminal section; belongs to the carbohydrate kinase PfkB family. This sequence in the C-terminal section; belongs to the cytidylyltransferase family. As to quaternary structure, homodimer.

It carries out the reaction D-glycero-beta-D-manno-heptose 7-phosphate + ATP = D-glycero-beta-D-manno-heptose 1,7-bisphosphate + ADP + H(+). The enzyme catalyses D-glycero-beta-D-manno-heptose 1-phosphate + ATP + H(+) = ADP-D-glycero-beta-D-manno-heptose + diphosphate. The protein operates within nucleotide-sugar biosynthesis; ADP-L-glycero-beta-D-manno-heptose biosynthesis; ADP-L-glycero-beta-D-manno-heptose from D-glycero-beta-D-manno-heptose 7-phosphate: step 1/4. It participates in nucleotide-sugar biosynthesis; ADP-L-glycero-beta-D-manno-heptose biosynthesis; ADP-L-glycero-beta-D-manno-heptose from D-glycero-beta-D-manno-heptose 7-phosphate: step 3/4. Functionally, catalyzes the phosphorylation of D-glycero-D-manno-heptose 7-phosphate at the C-1 position to selectively form D-glycero-beta-D-manno-heptose-1,7-bisphosphate. In terms of biological role, catalyzes the ADP transfer from ATP to D-glycero-beta-D-manno-heptose 1-phosphate, yielding ADP-D-glycero-beta-D-manno-heptose. The chain is Bifunctional protein HldE from Shewanella amazonensis (strain ATCC BAA-1098 / SB2B).